A 2049-amino-acid polypeptide reads, in one-letter code: Nonribosomal peptide synthetase tcpP (2049 aa).

Residues 13–395 (RHHAEAHPEA…LGRKDQLIKN (383 aa)) form an adenylation 1 region. In terms of domain architecture, Carrier 1 spans 497 to 573 (ATADTKLSAL…EISNHIIEFD (77 aa)). Serine 534 bears the O-(pantetheine 4'-phosphoryl)serine mark. Residues 605–913 (REITMTDVQR…ALGSKMDLLS (309 aa)) form a condensation 1 region. Positions 1071–1452 (VAAWPMSVAL…GRADHQVKVR (382 aa)) are adenylation 2. Residues 1550-1625 (DHTELVVSQV…SLAASVKKHL (76 aa)) form the Carrier 2 domain. Position 1585 is an O-(pantetheine 4'-phosphoryl)serine (serine 1585). The interval 1662–2044 (MHKQASNPSS…FEQEICNLLD (383 aa)) is condensation 2.

Belongs to the NRP synthetase family.

Its pathway is secondary metabolite biosynthesis. Functionally, nonribosomal peptide synthetase; part of the gene cluster that mediates the biosynthesis of an unusual class of epipolythiodioxopiperazines (ETPs) lacking the reactive thiol group important for toxicity. Firstly, L-tyrosine is prenylated by tcpD, before undergoing condensation with L-glycine in a reaction catalyzed by the NRPS tcpP leading to the diketopiperazine (DKP) backbone. Afterwards the alpha-carbon of tyrosine is oxidized by the cytochrome P450 tcpC to form a hydroxyl group. However, in contrast other ETP biosynthesis pathways studied so far, tcpC is not able to bishydroxylate the DKP at both alpha-carbon positions, but hydroxylates the alpha-carbon of the tyrosine part and the nitrogen of the glycine part. The next steps involve an alpha,beta-elimination reaction catalyzed by tcpI, a methylation by the methyltransferase tcpN the action of the four enzyme cascade tcpG/K/J/I. Due to a dysfunctional cytochrome P450 monooxygenase tcpC, the pathway leads to the biosynthesis of probable non-toxic metabolites lacking the reactive thiol group. In Claviceps purpurea (strain 20.1) (Ergot fungus), this protein is Nonribosomal peptide synthetase tcpP.